A 76-amino-acid chain; its full sequence is Small proline-rich protein 4 (76 aa).

The tract at residues proline 38–lysine 76 is disordered.

It belongs to the cornifin (SPRR) family. Post-translationally, cross-linked to membrane proteins by transglutaminase.

It localises to the cytoplasm. The protein resides in the cell cortex. Cross-linked envelope protein of keratinocytes. Involved in UV-induced cornification. The sequence is that of Small proline-rich protein 4 (Sprr4) from Mus musculus (Mouse).